The primary structure comprises 285 residues: Phospholipid phosphatase 1 (285 aa).

At 1–6 (MFDKAR) the chain is on the cytoplasmic side. Residues 5–7 (ARL) carry the PDZ-binding; involved in localization to the apical cell membrane motif. The helical transmembrane segment at 7–27 (LPYVALDVLCVVLAGLPFAIL) threads the bilayer. Residues 28–53 (TSRHTPFQRGIFCNDESIKYPYKEDT) lie on the Extracellular side of the membrane. Residues 54 to 74 (IPYALLGGIMIPFSIVVMIIG) traverse the membrane as a helical segment. The Cytoplasmic portion of the chain corresponds to 75 to 94 (ETLSVYCNLLHSNSFIRNNY). The chain crosses the membrane as a helical span at residues 95 to 115 (IATIYKSIGTFLFGAAASQSL). Topologically, residues 116 to 165 (TDIAKYSIGRLRPHFLSVCDPDWSKVNCSDGYIEYYVCRGNAEKVKEGRL) are extracellular. The tract at residues 120–128 (KYSIGRLRP) is phosphatase sequence motif I. An N-linked (GlcNAc...) asparagine glycan is attached at Asn142. Residues 166 to 186 (SFYSGHSSFSMYCMVFVALYL) traverse the membrane as a helical segment. Residues 168 to 171 (YSGH) are phosphatase sequence motif II. Catalysis depends on His171, which acts as the Proton donors. Residues 187 to 199 (QARMKGDWARLLR) are Cytoplasmic-facing. The helical transmembrane segment at 200 to 220 (PTLQFGLVAASIYVGLSRISD) threads the bilayer. Positions 216 to 227 (SRISDYKHHWSD) are phosphatase sequence motif III. Residues 221–229 (YKHHWSDVL) are Extracellular-facing. His223 acts as the Nucleophile in catalysis. The helical transmembrane segment at 230–250 (TGLIQGAIVAILVAVYVSDFF) threads the bilayer. Residues 251-285 (KARNSPFQERKEEDSHTTLHETPTAGNHYRSNHQP) are Cytoplasmic-facing. Residues 260-269 (RKEEDSHTTL) show a composition bias toward basic and acidic residues. Positions 260–285 (RKEEDSHTTLHETPTAGNHYRSNHQP) are disordered.

Belongs to the PA-phosphatase related phosphoesterase family. In terms of assembly, forms functional homodimers and homooligomers that are not required for substrate recognition and catalytic activity. Can also form heterooligomers with PLPP2 and PLPP3. Post-translationally, N-glycosylated. N-linked sugars are of the complex type. N-glycosylation is not required for the phosphatase activity.

It is found in the cell membrane. Its subcellular location is the apical cell membrane. The protein localises to the membrane raft. It localises to the membrane. The protein resides in the caveola. The enzyme catalyses a 1,2-diacyl-sn-glycero-3-phosphate + H2O = a 1,2-diacyl-sn-glycerol + phosphate. It catalyses the reaction 1,2-dihexadecanoyl-sn-glycero-3-phosphate + H2O = 1,2-dihexadecanoyl-sn-glycerol + phosphate. The catalysed reaction is 1,2-di-(9Z-octadecenoyl)-sn-glycero-3-phosphate + H2O = 1,2-di-(9Z-octadecenoyl)-sn-glycerol + phosphate. It carries out the reaction a monoacyl-sn-glycero-3-phosphate + H2O = a monoacylglycerol + phosphate. The enzyme catalyses (9Z)-octadecenoyl-sn-glycero-3-phosphate + H2O = (9Z-octadecenoyl)-glycerol + phosphate. It catalyses the reaction a 1-acyl-sn-glycero-3-phosphate + H2O = a 1-acyl-sn-glycerol + phosphate. The catalysed reaction is 1-(9Z-octadecenoyl)-sn-glycero-3-phosphate + H2O = 1-(9Z-octadecenoyl)-sn-glycerol + phosphate. It carries out the reaction a 1,2-diacyl-sn-glycerol 3-diphosphate + H2O = a 1,2-diacyl-sn-glycero-3-phosphate + phosphate + H(+). The enzyme catalyses sphing-4-enine 1-phosphate + H2O = sphing-4-enine + phosphate. It catalyses the reaction an N-acylsphing-4-enine 1-phosphate + H2O = an N-acylsphing-4-enine + phosphate. The catalysed reaction is N-(octanoyl)-sphing-4-enine-1-phosphate + H2O = N-octanoylsphing-4-enine + phosphate. It carries out the reaction N-(9Z-octadecenoyl)-ethanolamine phosphate + H2O = N-(9Z-octadecenoyl) ethanolamine + phosphate. The enzyme catalyses 1-hexadecanoyl-2-(9Z-octadecenoyl)-sn-glycero-3-phosphate + H2O = 1-hexadecanoyl-2-(9Z-octadecenoyl)-sn-glycerol + phosphate. It functions in the pathway lipid metabolism; phospholipid metabolism. Its activity is regulated as follows. Magnesium-independent phospholipid phosphatase. Insensitive to N-ethylmaleimide. Magnesium-independent phospholipid phosphatase of the plasma membrane that catalyzes the dephosphorylation of a variety of glycerolipid and sphingolipid phosphate esters including phosphatidate/PA, lysophosphatidate/LPA, diacylglycerol pyrophosphate/DGPP, sphingosine 1-phosphate/S1P and ceramide 1-phosphate/C1P. Also acts on N-oleoyl ethanolamine phosphate/N-(9Z-octadecenoyl)-ethanolamine phosphate, a potential physiological compound. Through its extracellular phosphatase activity allows both the hydrolysis and the cellular uptake of these bioactive lipid mediators from the milieu, regulating signal transduction in different cellular processes. It is for instance essential for the extracellular hydrolysis of S1P and subsequent conversion into intracellular S1P. Involved in the regulation of inflammation, platelets activation, cell proliferation and migration among other processes. May also have an intracellular activity to regulate phospholipid-mediated signaling pathways. The protein is Phospholipid phosphatase 1 of Cavia porcellus (Guinea pig).